We begin with the raw amino-acid sequence, 155 residues long: S-ribosylhomocysteine lyase (155 aa).

3 residues coordinate Fe cation: H58, H62, and C125.

Belongs to the LuxS family. Homodimer. Fe cation is required as a cofactor.

The enzyme catalyses S-(5-deoxy-D-ribos-5-yl)-L-homocysteine = (S)-4,5-dihydroxypentane-2,3-dione + L-homocysteine. Functionally, involved in the synthesis of autoinducer 2 (AI-2) which is secreted by bacteria and is used to communicate both the cell density and the metabolic potential of the environment. The regulation of gene expression in response to changes in cell density is called quorum sensing. Catalyzes the transformation of S-ribosylhomocysteine (RHC) to homocysteine (HC) and 4,5-dihydroxy-2,3-pentadione (DPD). This chain is S-ribosylhomocysteine lyase, found in Helicobacter pylori (strain P12).